Reading from the N-terminus, the 86-residue chain is Protein Tat (86 aa).

Residues Met-1 to Ala-21 form a disordered region. An interaction with human CREBBP region spans residues Met-1–Arg-24. Residues Met-1–Gly-48 form a transactivation region. Zn(2+) is bound by residues Cys-22, Cys-25, and Cys-27. A cysteine-rich region spans residues Cys-22–Cys-37. An N6-acetyllysine; by host PCAF modification is found at Lys-28. Residues Cys-30, His-33, Cys-34, and Cys-37 each coordinate Zn(2+). Residues Phe-38–Gly-48 form a core region. A disordered region spans residues Tyr-47 to Glu-86. A compositionally biased stretch (basic residues) spans Gly-48–Pro-58. Residues Arg-49–Arg-57 carry the Nuclear localization signal, RNA-binding (TAR), and protein transduction motif. Residues Arg-49 to Glu-86 are interaction with the host capping enzyme RNGTT. N6-acetyllysine; by host EP300 and GCN5L2 is present on residues Lys-50 and Lys-51. An asymmetric dimethylarginine; by host PRMT6 mark is found at Arg-52 and Arg-53. Polar residues predominate over residues Gln-60–Pro-77. Lys-71 participates in a covalent cross-link: Glycyl lysine isopeptide (Lys-Gly) (interchain with G-Cter in ubiquitin). Positions Arg-78 to Asp-80 match the Cell attachment site motif.

It belongs to the lentiviruses Tat family. As to quaternary structure, interacts with host CCNT1. Associates with the P-TEFb complex composed at least of Tat, P-TEFb (CDK9 and CCNT1), TAR RNA, RNA Pol II. Recruits the HATs CREBBP, TAF1/TFIID, EP300, PCAF and GCN5L2. Interacts with host KAT5/Tip60; this interaction targets the latter to degradation. Interacts with the host deacetylase SIRT1. Interacts with host capping enzyme RNGTT; this interaction stimulates RNGTT. Binds to host KDR, and to the host integrins ITGAV/ITGB3 and ITGA5/ITGB1. Interacts with host KPNB1/importin beta-1 without previous binding to KPNA1/importin alpha-1. Interacts with EIF2AK2. Interacts with host nucleosome assembly protein NAP1L1; this interaction may be required for the transport of Tat within the nucleus, since the two proteins interact at the nuclear rim. Interacts with host C1QBP/SF2P32; this interaction involves lysine-acetylated Tat. Interacts with the host chemokine receptors CCR2, CCR3 and CXCR4. Interacts with host DPP4/CD26; this interaction may trigger an anti-proliferative effect. Interacts with host LDLR. Interacts with the host extracellular matrix metalloproteinase MMP1. Interacts with host PRMT6; this interaction mediates Tat's methylation. Interacts with, and is ubiquitinated by MDM2/Hdm2. Interacts with host PSMC3 and HTATIP2. Interacts with STAB1; this interaction may overcome SATB1-mediated repression of IL2 and IL2RA (interleukin) in T cells by binding to the same domain than HDAC1. Interacts (when acetylated) with human CDK13, thereby increasing HIV-1 mRNA splicing and promoting the production of the doubly spliced HIV-1 protein Nef. Interacts with host TBP; this interaction modulates the activity of transcriptional pre-initiation complex. Interacts with host RELA. Interacts with host PLSCR1; this interaction negatively regulates Tat transactivation activity by altering its subcellular distribution. Asymmetrical arginine methylation by host PRMT6 seems to diminish the transactivation capacity of Tat and affects the interaction with host CCNT1. Post-translationally, acetylation by EP300, CREBBP, GCN5L2/GCN5 and PCAF regulates the transactivation activity of Tat. EP300-mediated acetylation of Lys-50 promotes dissociation of Tat from the TAR RNA through the competitive binding to PCAF's bromodomain. In addition, the non-acetylated Tat's N-terminus can also interact with PCAF. PCAF-mediated acetylation of Lys-28 enhances Tat's binding to CCNT1. Lys-50 is deacetylated by SIRT1. In terms of processing, polyubiquitination by host MDM2 does not target Tat to degradation, but activates its transactivation function and fosters interaction with CCNT1 and TAR RNA. Phosphorylated by EIF2AK2 on serine and threonine residues adjacent to the basic region important for TAR RNA binding and function. Phosphorylation of Tat by EIF2AK2 is dependent on the prior activation of EIF2AK2 by dsRNA.

The protein resides in the host nucleus. It is found in the host nucleolus. Its subcellular location is the host cytoplasm. The protein localises to the secreted. Functionally, transcriptional activator that increases RNA Pol II processivity, thereby increasing the level of full-length viral transcripts. Recognizes a hairpin structure at the 5'-LTR of the nascent viral mRNAs referred to as the transactivation responsive RNA element (TAR) and recruits the cyclin T1-CDK9 complex (P-TEFb complex) that will in turn hyperphosphorylate the RNA polymerase II to allow efficient elongation. The CDK9 component of P-TEFb and other Tat-activated kinases hyperphosphorylate the C-terminus of RNA Pol II that becomes stabilized and much more processive. Other factors such as HTATSF1/Tat-SF1, SUPT5H/SPT5, and HTATIP2 are also important for Tat's function. Besides its effect on RNA Pol II processivity, Tat induces chromatin remodeling of proviral genes by recruiting the histone acetyltransferases (HATs) CREBBP, EP300 and PCAF to the chromatin. This also contributes to the increase in proviral transcription rate, especially when the provirus integrates in transcriptionally silent region of the host genome. To ensure maximal activation of the LTR, Tat mediates nuclear translocation of NF-kappa-B by interacting with host RELA. Through its interaction with host TBP, Tat may also modulate transcription initiation. Tat can reactivate a latently infected cell by penetrating in it and transactivating its LTR promoter. In the cytoplasm, Tat is thought to act as a translational activator of HIV-1 mRNAs. In terms of biological role, extracellular circulating Tat can be endocytosed by surrounding uninfected cells via the binding to several surface receptors such as CD26, CXCR4, heparan sulfate proteoglycans (HSPG) or LDLR. Neurons are rarely infected, but they internalize Tat via their LDLR. Through its interaction with nuclear HATs, Tat is potentially able to control the acetylation-dependent cellular gene expression. Modulates the expression of many cellular genes involved in cell survival, proliferation or in coding for cytokines or cytokine receptors. Tat plays a role in T-cell and neurons apoptosis. Tat induced neurotoxicity and apoptosis probably contribute to neuroAIDS. Circulating Tat also acts as a chemokine-like and/or growth factor-like molecule that binds to specific receptors on the surface of the cells, affecting many cellular pathways. In the vascular system, Tat binds to ITGAV/ITGB3 and ITGA5/ITGB1 integrins dimers at the surface of endothelial cells and competes with bFGF for heparin-binding sites, leading to an excess of soluble bFGF. This Human immunodeficiency virus type 1 group M subtype D (isolate Z2/CDC-Z34) (HIV-1) protein is Protein Tat.